A 460-amino-acid chain; its full sequence is UDP-N-acetylmuramate--L-alanine ligase (460 aa).

An ATP-binding site is contributed by 116-122; the sequence is GSHGKTT.

This sequence belongs to the MurCDEF family.

The protein resides in the cytoplasm. It catalyses the reaction UDP-N-acetyl-alpha-D-muramate + L-alanine + ATP = UDP-N-acetyl-alpha-D-muramoyl-L-alanine + ADP + phosphate + H(+). It participates in cell wall biogenesis; peptidoglycan biosynthesis. Its function is as follows. Cell wall formation. This Caldanaerobacter subterraneus subsp. tengcongensis (strain DSM 15242 / JCM 11007 / NBRC 100824 / MB4) (Thermoanaerobacter tengcongensis) protein is UDP-N-acetylmuramate--L-alanine ligase.